The chain runs to 200 residues: LIM domain-containing protein WLIM2a (200 aa).

LIM zinc-binding domains follow at residues 8–68 (QKCR…LFKE) and 107–167 (DKCA…LFKE).

As to quaternary structure, interacts with F-actin. In terms of tissue distribution, expressed in roots, leaves, stems, flowers and siliques. Barely detected in pollen.

The protein localises to the cytoplasm. The protein resides in the cytoskeleton. Its function is as follows. Binds to actin filaments and promotes cross-linking into thick bundles. Has an actin-stabilizing activity. The actin regulatory activities are not regulated by pH and [Ca(2+)]. The sequence is that of LIM domain-containing protein WLIM2a from Arabidopsis thaliana (Mouse-ear cress).